A 523-amino-acid polypeptide reads, in one-letter code: Arylsulfatase K (523 aa).

The signal sequence occupies residues M1–C16. D35 and C75 together coordinate Ca(2+). C75 functions as the Nucleophile in the catalytic mechanism. C75 bears the 3-oxoalanine (Cys) mark. An N-linked (GlcNAc...) asparagine glycan is attached at N103. Substrate is bound by residues K123 and H246. Residue N257 is glycosylated (N-linked (GlcNAc...) asparagine). D308 and H309 together coordinate Ca(2+). An N-linked (GlcNAc...) asparagine glycan is attached at N405.

It belongs to the sulfatase family. Ca(2+) is required as a cofactor. In terms of processing, the conversion to 3-oxoalanine (also known as C-formylglycine, FGly), of a serine or cysteine residue in prokaryotes and of a cysteine residue in eukaryotes, is critical for catalytic activity.

The protein resides in the secreted. The protein localises to the lysosome. The catalysed reaction is an aryl sulfate + H2O = a phenol + sulfate + H(+). It carries out the reaction Hydrolysis of the 2-sulfate groups of the 2-O-sulfo-D-glucuronate residues of chondroitin sulfate, heparin and heparitin sulfate.. Functionally, catalyzes the hydrolysis of pseudosubstrates such as p-nitrocatechol sulfate and p-nitrophenyl sulfate. Catalyzes the hydrolysis of the 2-sulfate groups of the 2-O-sulfo-D-glucuronate residues of chondroitin sulfate, heparin and heparitin sulfate. Acts selectively on 2-sulfoglucuronate and lacks activity against 2-sulfoiduronate. In Danio rerio (Zebrafish), this protein is Arylsulfatase K (arsk).